The following is a 478-amino-acid chain: Sulfate adenylyltransferase subunit 1 (478 aa).

Residues 28 to 244 enclose the tr-type G domain; that stretch reads KTMLRFLTCG…LESVDVVNAR (217 aa). The tract at residues 37-44 is G1; the sequence is GSVDDGKS. A GTP-binding site is contributed by 37-44; the sequence is GSVDDGKS. The tract at residues 95–99 is G2; sequence GITID. The tract at residues 116–119 is G3; it reads DTPG. Residues 116–120 and 171–174 each bind GTP; these read DTPGH and NKMD. The tract at residues 171 to 174 is G4; sequence NKMD. Residues 209–211 are G5; the sequence is SAL.

Belongs to the TRAFAC class translation factor GTPase superfamily. Classic translation factor GTPase family. CysN/NodQ subfamily. As to quaternary structure, heterodimer composed of CysD, the smaller subunit, and CysN.

The catalysed reaction is sulfate + ATP + H(+) = adenosine 5'-phosphosulfate + diphosphate. The protein operates within sulfur metabolism; hydrogen sulfide biosynthesis; sulfite from sulfate: step 1/3. With CysD forms the ATP sulfurylase (ATPS) that catalyzes the adenylation of sulfate producing adenosine 5'-phosphosulfate (APS) and diphosphate, the first enzymatic step in sulfur assimilation pathway. APS synthesis involves the formation of a high-energy phosphoric-sulfuric acid anhydride bond driven by GTP hydrolysis by CysN coupled to ATP hydrolysis by CysD. This chain is Sulfate adenylyltransferase subunit 1, found in Yersinia pseudotuberculosis serotype O:1b (strain IP 31758).